The primary structure comprises 879 residues: MLLRLLLLLAPCGAGFATEVVSISLRGNWKIHNGNGSLQLPAAVPGCVHSALFNKRIIKDPYYRFNNLDYRWIALDNWTYIKKFKLHSDMSEWNKVNLVFEGIDTVAVVLLNSVPIGKTDNMFRRYSFDITHMVKAVNIIEVRFQSPVIYANQRSERHTAYWVPPNCPPPVQDGECHVNFIRKMQCSFGWDWGPSFPTQGIWKDVRIEAYNICHLNYFMFTPIYDNYMETWNLKIESSFDVVSSKLVSGEAIVAIPELNIQQRNNIELRHGERTVKLFVKIDKAVIVETWWPHGHGNQTGYDMTVTFELDGGLRFEKSAKVYFRTVELVEEPIQNSPGLTFYFKINGLPIFLKGSNWIPADSFQDRVTSDMLRLLLQSVVDANMNALRVWGGGIYEQDEFYELCDELGIMIWQDFMFACALYPTDEDFMDSVREEVTHQVRRLKSHPSIITWSGNNENEAALMMGWYDTKPGYLHTYIKDYVTLYVKNIRTIVLEGDQTRPFIISSPTNGAKTTAEGWLSPNPYDLNYGDVHFYDYMSDCWNWRTFPKARFVSEYGYQSWPSFSTLEKVSSEEDWSYESSFALHRQHLINGNSEMLQQIELHFKLPNSADQLRRFKDTLYLTQVMQAQCVKTETEFYRRSRNEIVDGKGHTMGALYWQLNDIWQAPSWSSLEYGGKWKMLHYFARRFFAPLLPVGFEDKDVLFIYGVSDLPSDHQMMLTVRVHTWSSLELVCSELTNPFVMKAGESVVLYSKPVPELLKGCPGCTRQSCVVSFYLSTDGELLSPINYHFLSSLKNAKGLHKANITATISQQGNTFVFDLKTSAVAPFVWLDVGSIPGRFSDNGFLMTEKTRTVFFYPWKPTSKSELEQSFHVTSLADTY.

The first 17 residues, 1-17 (MLLRLLLLLAPCGAGFA), serve as a signal peptide directing secretion. N-linked (GlcNAc...) asparagine glycosylation is found at N35 and N77. A disulfide bond links C167 and C176. Position 190–192 (190–192 (WDW)) interacts with substrate. Residue N297 is glycosylated (N-linked (GlcNAc...) asparagine). Residue N456 participates in substrate binding. E457 (proton donor) is an active-site residue. Disulfide bonds link C540/C629, C732/C761, and C764/C769. E554 serves as the catalytic Nucleophile. N803 carries an N-linked (GlcNAc...) asparagine glycan.

The protein belongs to the glycosyl hydrolase 2 family. Monomer. N-glycosylated. In terms of tissue distribution, detected in kidney (at protein level). Found in spleen and to a lesser extent in liver. Not detected in kidney or brain.

The protein resides in the lysosome. The catalysed reaction is Hydrolysis of terminal, non-reducing beta-D-mannose residues in beta-D-mannosides.. The protein operates within glycan metabolism; N-glycan degradation. Exoglycosidase that cleaves the single beta-linked mannose residue from the non-reducing end of all N-linked glycoprotein oligosaccharides. In Capra hircus (Goat), this protein is Beta-mannosidase (MANBA).